A 1125-amino-acid chain; its full sequence is MKRGLRRILLPEERKEVQGVVYRGVGEDMDCSKESFKVDIEGDMCRLEDFIKNRRKLSKYEDENLCPLHHAAAEGQVELMELIINGSSCEVLNIMDGYGNTPLHCAAEKNQVESVKFLLSQGANPNLRNRNMMSPLHIAVHGMYNEVIKVLTEHKATNINLEGENGNTALMSTCAKDNSEALQILLEKGAKLCKSNKWGDYPVHQAAFSGAKKCMELILAYGEKNGYSRETHINFVNHKKASPLHLAVQSGDLDMIKMCLDNGAHIDMMENAKCMALHFAATQGATDIVKLMISSYTGSSDIVNAVDGNQETLLHRASLFDHHDLAEYLISVGADINSTDSEGRSPLILATASASWNIVNLLLCKGAKVDIKDHLGRNFLHLTVQQPYGLRNLRPEFMQMQHIKELVMDEDNDGCTPLHYACRQGVPVSVNNLLGFNVSIHSKSKDKKSPLHFAASYGRINTCQRLLQDISDTRLLNEGDLHGMTPLHLAAKNGHDKVVQLLLKKGALFLSDHNGWTALHHASMGGYTQTMKVILDTNLKCTDRLDEEGNTALHFAAREGHAKAVAMLLSYNADILLNKKQASFLHIALHNKRKEVVLTTIRNKRWDECLQVFTHNSPSNRCPIMEMVEYLPECMKVLLDFCMIPSTEDKSCQDYHIEYNFKYLQCPLSMTKKVAPTQDVVYEPLTILNVMVQHNRIELLNHPVCREYLLMKWCAYGFRAHMMNLGSYCLGLIPMTLLVVKIQPGMAFNSTGIINGTSSTHEERIDTLNSFPIKICMILVFLSSIFGYCKEVIQIFQQKRNYFLDYNNALEWVIYTTSIIFVLPLFLNIPAYMQWQCGAIAIFFYWMNFLLYLQRFENCGIFIVMLEVIFKTLLRSTGVFIFLLLAFGLSFYVLLNFQDAFSTPLLSLIQTFSMMLGDINYRDAFLEPLFRNELAYPVLTFGQLIAFTMFVPIVLMNLLIGLAVGDIAEVQKHASLKRIAMQVELHTNLEKKLPLWYLRKVDQRSTIVYPNRPRHGRMLRFFHYFLNMQETRQEVPNIDTCLEMEILKQKYRLKDLTSLLEKQHELIKLIIQKMEIISETEDEDNHCSFQDRFKKERLEQMHSKWNFVLNAVKTKTHCSISHPDF.

Topologically, residues 1–721 are cytoplasmic; it reads MKRGLRRILL…KWCAYGFRAH (721 aa). 9 ANK repeats span residues 63–94, 98–127, 131–161, 165–194, 198–227, 239–268, 272–301, 309–338, and 342–371; these read ENLCPLHHAAAEGQVELMELIINGSSCEVLNI, YGNTPLHCAAEKNQVESVKFLLSQGANPNL, NMMSPLHIAVHGMYNEVIKVLTEHKATNINL, NGNTALMSTCAKDNSEALQILLEKGAKLCK, WGDYPVHQAAFSGAKKCMELILAYGEKNGY, KKASPLHLAVQSGDLDMIKMCLDNGAHIDM, AKCMALHFAATQGATDIVKLMISSYTGSSD, NQETLLHRASLFDHHDLAEYLISVGADINS, and EGRSPLILATASASWNIVNLLLCKGAKVDI. 5 disulfide bridges follow: Cys193–Cys666, Cys463–Cys666, Cys609–Cys622, Cys622–Cys666, and Cys634–Cys859. Residue Pro395 is modified to 4-hydroxyproline; transient. 5 ANK repeats span residues 413 to 442, 446 to 475, 482 to 511, 514 to 543, and 548 to 577; these read DGCTPLHYACRQGVPVSVNNLLGFNVSIHS, DKKSPLHFAASYGRINTCQRLLQDISDTRL, HGMTPLHLAAKNGHDKVVQLLLKKGALFLS, NGWTALHHASMGGYTQTMKVILDTNLKCTD, and EGNTALHFAAREGHAKAVAMLLSYNADILL. (E)-cinnamaldehyde is bound by residues Cys415 and Cys422. Cys622 provides a ligand contact to (E)-cinnamaldehyde. Cys634 carries the post-translational modification Cysteine sulfenic acid (-SOH); transient; in hyperoxia. (E)-cinnamaldehyde-binding residues include Cys642, Cys666, and Lys712. The helical transmembrane segment at 722–742 threads the bilayer; sequence MMNLGSYCLGLIPMTLLVVKI. Residues 743–767 are Extracellular-facing; the sequence is QPGMAFNSTGIINGTSSTHEERIDT. Residues Asn749 and Asn755 are each glycosylated (N-linked (GlcNAc...) asparagine). A helical membrane pass occupies residues 768–788; sequence LNSFPIKICMILVFLSSIFGY. At 789 to 806 the chain is on the cytoplasmic side; it reads CKEVIQIFQQKRNYFLDY. 4 residues coordinate Ca(2+): Glu791, Gln794, Asn808, and Glu811. Residues 807–827 traverse the membrane as a helical segment; that stretch reads NNALEWVIYTTSIIFVLPLFL. The Extracellular portion of the chain corresponds to 828–832; that stretch reads NIPAY. A helical transmembrane segment spans residues 833–853; the sequence is MQWQCGAIAIFFYWMNFLLYL. Over 854-876 the chain is Cytoplasmic; that stretch reads QRFENCGIFIVMLEVIFKTLLRS. Position 859 is a cysteine sulfenic acid (-SOH); transient; in hyperoxia (Cys859). The chain crosses the membrane as a helical span at residues 877 to 897; sequence TGVFIFLLLAFGLSFYVLLNF. At 898–904 the chain is on the extracellular side; sequence QDAFSTP. The segment at residues 905-925 is an intramembrane region (pore-forming); sequence LLSLIQTFSMMLGDINYRDAF. At 926–937 the chain is on the extracellular side; that stretch reads LEPLFRNELAYP. Residues 938-959 form a helical membrane-spanning segment; that stretch reads VLTFGQLIAFTMFVPIVLMNLL. At 960–1125 the chain is on the cytoplasmic side; sequence IGLAVGDIAE…THCSISHPDF (166 aa). A coiled-coil region spans residues 1044–1073; the sequence is MEILKQKYRLKDLTSLLEKQHELIKLIIQK. 1048 to 1054 is a binding site for a 1,2-diacyl-sn-glycero-3-phospho-(1D-myo-inositol); the sequence is KQKYRLK.

The protein belongs to the transient receptor (TC 1.A.4) family. As to quaternary structure, homotetramer. Interacts with TMEM100. Interacts with EGLN1. Interacts with the scorpion wasabi receptor toxin at the same site that electrophiles but in a non-covalent manner. In terms of processing, TRPA1 activation by electrophiles occurs though covalent modification of specific cysteine residues in the N-terminal cytoplasmic domain. Hydroxylation is required for TRPA1 activity inhibition in normoxia. In hypoxia, the decrease in oxygen concentration diminishes the activity of the hydroxylase EGLN1, thus relieving TRPA1 from inhibition and ultimately leading to channel activation. Post-translationally, oxidation of Cys-634 and Cys-859 in hyperoxia may override the hydroxylase EGLN1-mediated inhibition, causing TRPA1 activation. As to expression, expressed in inner ear (at protein level). Specifically expressed in a subset of nociceptive neurons. Expressed in the same neurons that TRPV1. In contrast, it is not expressed in neurons expressing TRPM8. Expressed in the superior cervical ganglion of vagus nerve. Expressed in the inferior ganglion (nodose ganglion) of vagus nerve. Expressed in dorsal root ganglia neurons.

It localises to the cell membrane. The catalysed reaction is Ca(2+)(in) = Ca(2+)(out). The enzyme catalyses Mg(2+)(in) = Mg(2+)(out). It catalyses the reaction Na(+)(in) = Na(+)(out). It carries out the reaction K(+)(in) = K(+)(out). The catalysed reaction is Zn(2+)(in) = Zn(2+)(out). With respect to regulation, electrophilic ligands activate the channel by covalent modification of intracellular cysteines. Cys-622 plays a key role in covalent binding of electrophiles. Extracellular Ca(2+) both potentiates and inactivates TRPA1; a rapid potentiation follows by slow desensitization. Activated by increase in intracellular Ca(2+) concentration. Inhibited by the potent blocker of TRPV channels ruthenium red, A-967079. Activated by icilin, sulfhydryl reactive agent MTSEA, N-methyl maleimide (NMM), and PF-4840154. Also activated by hyperoxia. Activated by intracellular Zn(2+). TRPA1 activation may critically depend on the presence of small intracellular compounds such as polyphosphates. In terms of biological role, ligand-activated Ca(2+)-permeable, nonselective cation channel. Involved in pain detection and possibly also in cold perception, oxygen concentration perception, cough, itch, and inner ear function. Has a relatively high Ca(2+) selectivity, with a preference for divalent over monovalent cations (Ca(2+) &gt; Ba(2+) &gt; Mg(2+) &gt; NH4(+) &gt; Li(+) &gt; K(+)), the influx of cation into the cytoplasm, leads to membrane depolarization. Has a central role in the pain response to endogenous inflammatory mediators, such as bradykinin and to a diverse array of irritants. Activated by a large variety of structurally unrelated electrophilic and non-electrophilic chemical compounds, such as allylthiocyanate (AITC) from mustard oil or wasabi, cinnamaldehyde, diallyl disulfide (DADS) from garlic, and acrolein, an environmental irritant. Electrophilic ligands activate TRPA1 by interacting with critical N-terminal Cys residues in a covalent manner. Non-electrophile agonists bind at distinct sites in the transmembrane domain to promote channel activation. Also acts as an ionotropic cannabinoid receptor by being activated by delta(9)-tetrahydrocannabinol (THC), the psychoactive component of marijuana. May be a component for the mechanosensitive transduction channel of hair cells in inner ear, thereby participating in the perception of sounds. The protein is Transient receptor potential cation channel subfamily A member 1 of Mus musculus (Mouse).